The primary structure comprises 215 residues: Cytochrome b6 (215 aa).

A helical transmembrane segment spans residues 32–52 (IFYCFGGITFTCFLVQVATGF). C35 provides a ligand contact to heme c. Heme b-binding residues include H86 and H100. Transmembrane regions (helical) follow at residues 90 to 110 (ASMM…TGGF), 116 to 136 (LTWV…VTGY), and 186 to 206 (LHTF…FLMI). H187 and H202 together coordinate heme b.

Belongs to the cytochrome b family. PetB subfamily. In terms of assembly, the 4 large subunits of the cytochrome b6-f complex are cytochrome b6, subunit IV (17 kDa polypeptide, PetD), cytochrome f and the Rieske protein, while the 4 small subunits are PetG, PetL, PetM and PetN. The complex functions as a dimer. Requires heme b as cofactor. It depends on heme c as a cofactor.

The protein resides in the plastid. The protein localises to the chloroplast thylakoid membrane. Its function is as follows. Component of the cytochrome b6-f complex, which mediates electron transfer between photosystem II (PSII) and photosystem I (PSI), cyclic electron flow around PSI, and state transitions. The polypeptide is Cytochrome b6 (Auxenochlorella protothecoides (Green microalga)).